A 23-amino-acid polypeptide reads, in one-letter code: Coenzyme PQQ synthesis protein A (23 aa).

Positions E15–Y19 form a cross-link, pyrroloquinoline quinone (Glu-Tyr).

Belongs to the PqqA family.

It participates in cofactor biosynthesis; pyrroloquinoline quinone biosynthesis. Required for coenzyme pyrroloquinoline quinone (PQQ) biosynthesis. PQQ is probably formed by cross-linking a specific glutamate to a specific tyrosine residue and excising these residues from the peptide. The sequence is that of Coenzyme PQQ synthesis protein A from Klebsiella pneumoniae (strain 342).